The chain runs to 384 residues: 1-deoxy-D-xylulose 5-phosphate reductoisomerase (384 aa).

Positions 10, 11, 12, 13, 37, 38, and 124 each coordinate NADPH. Lysine 125 contacts 1-deoxy-D-xylulose 5-phosphate. Glutamate 126 provides a ligand contact to NADPH. Mn(2+) is bound at residue aspartate 150. 1-deoxy-D-xylulose 5-phosphate is bound by residues serine 151, glutamate 152, serine 176, and histidine 199. Glutamate 152 is a Mn(2+) binding site. Residue glycine 205 coordinates NADPH. Serine 212, asparagine 217, lysine 218, and glutamate 221 together coordinate 1-deoxy-D-xylulose 5-phosphate. Glutamate 221 serves as a coordination point for Mn(2+).

It belongs to the DXR family. It depends on Mg(2+) as a cofactor. Mn(2+) serves as cofactor.

The enzyme catalyses 2-C-methyl-D-erythritol 4-phosphate + NADP(+) = 1-deoxy-D-xylulose 5-phosphate + NADPH + H(+). The protein operates within isoprenoid biosynthesis; isopentenyl diphosphate biosynthesis via DXP pathway; isopentenyl diphosphate from 1-deoxy-D-xylulose 5-phosphate: step 1/6. In terms of biological role, catalyzes the NADPH-dependent rearrangement and reduction of 1-deoxy-D-xylulose-5-phosphate (DXP) to 2-C-methyl-D-erythritol 4-phosphate (MEP). This is 1-deoxy-D-xylulose 5-phosphate reductoisomerase from Clostridium perfringens (strain ATCC 13124 / DSM 756 / JCM 1290 / NCIMB 6125 / NCTC 8237 / Type A).